The chain runs to 207 residues: MSQFFYIHPENPQARLINQAVEILQKGGVIVYPTDSGYALGCMMGDKHAMDRIVAIRKLPEGHNFTLVCSDLSELSTYARVNNTAYRLIKNNTPGRYTFILTATKELPRRLMTSKRKTIGLRVPDNKIALDLLSALGEPILSCSLMLPNEEHTTQSDPEEIRDRLEHQVDLIIHGGYLGQEPTTVVDLTEESPVILREGSGSTAPFI.

The YrdC-like domain occupies 14–201 (ARLINQAVEI…SPVILREGSG (188 aa)).

Belongs to the SUA5 family.

This is an uncharacterized protein from Haemophilus influenzae (strain ATCC 51907 / DSM 11121 / KW20 / Rd).